The chain runs to 117 residues: Putative membrane protein insertion efficiency factor (117 aa).

The interval 87–117 is disordered; sequence RKGGPSAAEPAIEGHIPSSPAAETPSHVQGA.

Belongs to the UPF0161 family.

The protein localises to the cell membrane. Functionally, could be involved in insertion of integral membrane proteins into the membrane. The chain is Putative membrane protein insertion efficiency factor from Streptomyces avermitilis (strain ATCC 31267 / DSM 46492 / JCM 5070 / NBRC 14893 / NCIMB 12804 / NRRL 8165 / MA-4680).